A 104-amino-acid chain; its full sequence is MVTIPPLVSRWFPVCGFRVCKISSPFAFTTPRWPHNDVYIGLPITLLHFPAHFQKFSQPAEISDKRYRVLLCNGHQTPALQQGTHSSRQVTPLSLRSRSSTFNK.

The Nuclear export signal signature appears at 1–35 (MVTIPPLVSRWFPVCGFRVCKISSPFAFTTPRWPH). A disordered region spans residues 78–104 (PALQQGTHSSRQVTPLSLRSRSSTFNK).

In terms of assembly, interacts with host RGS16.

The protein localises to the host cytoplasm. The protein resides in the host nucleus. Functionally, plays a role in modulating host cell signaling by binding to and degrading host RGS16. Not necessary for virus replication. In Sus scrofa (Pig), this protein is Protein ORF3.